Here is a 310-residue protein sequence, read N- to C-terminus: Beta-carotene 3-hydroxylase 1, chloroplastic (310 aa).

The N-terminal 51 residues, 1-51 (MAAGLSTAVTFKPLHRSFSSSSTDFRLRLPKSLSGFSPSLRFKRFSVCYVV), are a transit peptide targeting the chloroplast. The next 2 helical transmembrane spans lie at 98 to 118 (YLIA…MAVY) and 132 to 152 (MLEM…MEFW). In terms of domain architecture, Fatty acid hydroxylase spans 145-272 (AAVGMEFWAR…KFNGVPYGLF (128 aa)). The short motif at 157–162 (HRALWH) is the Histidine box-1 element. Positions 169–173 (HESHH) match the Histidine box-2 motif. 2 helical membrane passes run 183–203 (NDVF…YGFF) and 208–228 (VPGL…AYMF). Residues 230-235 (HDGLVH) carry the Histidine box-3 motif. The short motif at 256–260 (HQLHH) is the Histidine box-4 element.

It belongs to the sterol desaturase family. Homodimer. As to expression, expressed in leaves, flowers, stems, roots and siliques.

It localises to the plastid. It is found in the chloroplast membrane. It catalyses the reaction all-trans-beta-carotene + 4 reduced [2Fe-2S]-[ferredoxin] + 2 O2 + 4 H(+) = all-trans-zeaxanthin + 4 oxidized [2Fe-2S]-[ferredoxin] + 2 H2O. In terms of biological role, nonheme diiron monooxygenase involved in the biosynthesis of xanthophylls. Specific for beta-ring hydroxylations of beta-carotene. Also has a low activity toward the beta- and epsilon-rings of alpha-carotene. No activity with acyclic carotenoids such as lycopene and neurosporene. Uses ferredoxin as an electron donor. The chain is Beta-carotene 3-hydroxylase 1, chloroplastic (BETA-OHASE 1) from Arabidopsis thaliana (Mouse-ear cress).